Consider the following 340-residue polypeptide: Serine racemase (340 aa).

Residue E13 coordinates Mg(2+). ATP contacts are provided by S31, S32, I33, K51, and T52. The active-site Proton acceptor is K56. K56 is subject to N6-(pyridoxal phosphate)lysine. Ca(2+)-binding residues include P69 and T81. S84 (proton acceptor) is an active-site residue. N86 contributes to the pyridoxal 5'-phosphate binding site. Q89 serves as a coordination point for ATP. C113 carries the post-translational modification S-nitrosocysteine. Y121 contributes to the ATP binding site. N154 contacts pyridoxal 5'-phosphate. Residue D178 coordinates Mg(2+). 5 residues coordinate pyridoxal 5'-phosphate: G185, G186, G187, G188, and M189. 4 residues coordinate Mg(2+): E210, A214, D216, and N247. Residues E210, A214, D216, and N247 each contribute to the Ca(2+) site. Residues E210, A214, and D216 each coordinate Mn(2+). An ATP-binding site is contributed by K279. S313 provides a ligand contact to pyridoxal 5'-phosphate. N316 contacts ATP.

This sequence belongs to the serine/threonine dehydratase family. As to quaternary structure, homodimer. The cofactor is Mg(2+). Mn(2+) serves as cofactor. It depends on Ca(2+) as a cofactor. Pyridoxal 5'-phosphate is required as a cofactor. In terms of processing, S-nitrosylated, leading to decrease the enzyme activity. Expressed in the cerebellum, hippocampus, dorsolateral prefrontal cortex, and in motor neurons and glial cells of the lumbar spinal cord (at protein level). Increased in the dorsolateral prefrontal cortex of schizophrenic patients (at protein level). Brain: expressed at high levels in hippocampus and corpus callosum, intermediate levels in substantia nigra and caudate, and low levels in amygdala, thalamus, and subthalamic nuclei. Expressed in heart, skeletal muscle, kidney, and liver.

The enzyme catalyses L-serine = D-serine. The catalysed reaction is D-serine = pyruvate + NH4(+). It catalyses the reaction L-serine = pyruvate + NH4(+). With respect to regulation, allosterically activated by magnesium, and possibly also other divalent metal cations. Allosterically activated by ATP, ADP or GTP. Competitively inhibited by malonate. Inhibited by meso-tartrate and malonate. Its function is as follows. Catalyzes the synthesis of D-serine from L-serine. D-serine is a key coagonist with glutamate at NMDA receptors. Has dehydratase activity towards both L-serine and D-serine. This Homo sapiens (Human) protein is Serine racemase (SRR).